The chain runs to 617 residues: Proline--tRNA ligase (617 aa).

This sequence belongs to the class-II aminoacyl-tRNA synthetase family. ProS type 1 subfamily. In terms of assembly, homodimer.

It is found in the cytoplasm. It carries out the reaction tRNA(Pro) + L-proline + ATP = L-prolyl-tRNA(Pro) + AMP + diphosphate. In terms of biological role, catalyzes the attachment of proline to tRNA(Pro) in a two-step reaction: proline is first activated by ATP to form Pro-AMP and then transferred to the acceptor end of tRNA(Pro). As ProRS can inadvertently accommodate and process non-cognate amino acids such as alanine and cysteine, to avoid such errors it has two additional distinct editing activities against alanine. One activity is designated as 'pretransfer' editing and involves the tRNA(Pro)-independent hydrolysis of activated Ala-AMP. The other activity is designated 'posttransfer' editing and involves deacylation of mischarged Ala-tRNA(Pro). The misacylated Cys-tRNA(Pro) is not edited by ProRS. The sequence is that of Proline--tRNA ligase from Streptococcus pneumoniae (strain ATCC BAA-255 / R6).